The sequence spans 412 residues: Ornithine cyclodeaminase (412 aa).

10 residues coordinate NAD(+): Asn237, Ala238, Asp316, Thr348, Met349, Leu350, His351, Asp369, Asp392, and Val393.

The protein belongs to the AgrE/ArgZ ornithine cyclodeaminase family. It depends on NAD(+) as a cofactor.

The enzyme catalyses L-ornithine = L-proline + NH4(+). Functionally, catalyzes the conversion of ornithine to proline, with the release of ammonia. The chain is Ornithine cyclodeaminase from Methanopyrus kandleri (strain AV19 / DSM 6324 / JCM 9639 / NBRC 100938).